Here is a 348-residue protein sequence, read N- to C-terminus: Terpene cyclase ctvD (348 aa).

A helical membrane pass occupies residues 2 to 22 (ALSAYFLLCLSVLGLDAIYGF). A glycan (N-linked (GlcNAc...) asparagine) is linked at Asn51. 7 helical membrane-spanning segments follow: residues 77–97 (PGLS…WVAI), 116–136 (LFAM…WCAI), 161–181 (LIPI…LLPE), 191–211 (QIAI…HWGL), 235–255 (FAFV…LTLI), 283–303 (GLWF…LWAM), and 323–343 (LKVG…WLLW).

Belongs to the membrane-bound ascI terpene cyclase family.

It is found in the membrane. It participates in mycotoxin biosynthesis. In terms of biological role, hydrolase; part of the gene cluster that mediates the biosynthesis of citreoviridin, an inhibitor of the of F1-ATPase beta-subunit. The HR-PKS ctvA accepts acetyl-CoA as the starter unit and catalyzes eight iterations of malonyl-CoA extension and four iterations of SAM-dependent methylation at C4, C12, C14, and C16. The KR and DH domains selectively act on the first six iterations to generate the hexaene chain. In the last three iterations, the KR and DH domains terminate their functions to yield a beta,delta-diketo ester moiety, which then undergoes intramolecular cyclization to yield an alpha-pyrone intermediate. Subsequently, ctvB methylates the alpha-pyrone hydroxyl group to generate citreomontanin. In order to form the tetrahydrofuran ring with the correct stereochemistry, the terminal alkenes of citreomontanin need to undergo isomerization to yield a (17Z)-hexaene, a step that could be catalyzed by ctvC. The (17Z)-hexaene then undergoes bisepoxidation by ctvC to form a (17R,16R,15S,14R)-bisepoxide moiety. Lastly, ctvD acts as a regioselective hydrolase to form the tetrahydrofuran ring with the substituents in the correct absolute configuration, completing the biosynthesis of citreoviridin. The polypeptide is Terpene cyclase ctvD (Aspergillus terreus (strain NIH 2624 / FGSC A1156)).